We begin with the raw amino-acid sequence, 881 residues long: Sodium/sulfate cotransporter 1 (881 aa).

6 helical membrane passes run 8–28 (GIVAVTFTALAFVVMAADWVG), 31–51 (ITFTVLLAFLTAFDGQIVTVA), 61–81 (GLLTVVFLYWVAEGITQTGGL), 107–127 (MVLSAFLNNTPCVTFMIPILI), 140–160 (LLIPLSYAAVLGGTCTSIGTS), and 186–206 (IFDIAPYGVPYALWGFVFILL). 4 RCK C-terminal domains span residues 212 to 296 (LPGN…EYGL), 318 to 402 (VFSA…IKTN), 407 to 492 (LHAV…FPGL), and 498 to 584 (EQVD…DKSF). 6 helical membrane passes run 601–621 (MIIGVLLATGMVLTQIIGGLK), 625–645 (YIHLWPCAVLTAALMLLTGCM), 658–678 (VYLTIAAAFGVSAALEGTGVA), 684–704 (AIISIGKGAGGTGAALIAIYI), 775–795 (FAIVGAPFQVWLMIVAGFILV), and 803–823 (VWIVSWICTAGIVLLPALYFL). The disordered stretch occupies residues 854-881 (SLRRQVSHTRTDDSGSSGSPLPAPKIVA).

The protein belongs to the divalent anion:Na+ symporter (DASS) superfamily. Na+/sulfate symporter (TC 2.A.47.4) family.

Its subcellular location is the cell membrane. In terms of biological role, na(+)/sulfate cotransporter with a probable high-affinity for sulfate and a proteasome dependent turnover. The protein is Sodium/sulfate cotransporter 1 (SLT1) of Chlamydomonas reinhardtii (Chlamydomonas smithii).